Reading from the N-terminus, the 551-residue chain is Palmdelphin (551 aa).

Met-1 is subject to N-acetylmethionine. Positions 12 to 106 (QAITDKRKIQ…LQISANEEVI (95 aa)) form a coiled coil. Lys-125 participates in a covalent cross-link: Glycyl lysine isopeptide (Lys-Gly) (interchain with G-Cter in SUMO2). Ser-135 and Ser-163 each carry phosphoserine. Residue Lys-178 forms a Glycyl lysine isopeptide (Lys-Gly) (interchain with G-Cter in SUMO1); alternate linkage. Lys-178 participates in a covalent cross-link: Glycyl lysine isopeptide (Lys-Gly) (interchain with G-Cter in SUMO2); alternate. Residues 247–258 (ERNSKSPTEYHE) show a composition bias toward basic and acidic residues. The tract at residues 247-267 (ERNSKSPTEYHEPVYANPFCR) is disordered. Thr-270 is subject to Phosphothreonine. Disordered stretches follow at residues 298-387 (HESE…CSSP) and 452-536 (EDDE…DPSL). Residues Ser-322, Ser-350, Ser-371, Ser-376, Ser-385, and Ser-386 each carry the phosphoserine modification. Residues 484-495 (KRSEVSPHENTN) are compositionally biased toward basic and acidic residues. Ser-498, Ser-515, and Ser-520 each carry phosphoserine.

This sequence belongs to the paralemmin family. In terms of assembly, interacts with GLUL. Post-translationally, phosphorylated. Expressed in the brain and the spinal cord. Expressed in the anterior olfactory nucleus, the olfactory tubercle, the nucleus supraopticus, the nucleus of the lateral olfactory tract, the piriform cortex, the cortico-amygdaloid transition zone, the septofimbrial nucleus and the indusium griseum (at protein level).

It localises to the cytoplasm. The protein localises to the cell projection. It is found in the dendrite. Its subcellular location is the dendritic spine. The sequence is that of Palmdelphin (Palmd) from Rattus norvegicus (Rat).